A 119-amino-acid polypeptide reads, in one-letter code: Large ribosomal subunit protein bL20 (119 aa).

Belongs to the bacterial ribosomal protein bL20 family.

Binds directly to 23S ribosomal RNA and is necessary for the in vitro assembly process of the 50S ribosomal subunit. It is not involved in the protein synthesizing functions of that subunit. The polypeptide is Large ribosomal subunit protein bL20 (Cellvibrio japonicus (strain Ueda107) (Pseudomonas fluorescens subsp. cellulosa)).